Consider the following 340-residue polypeptide: L-threonine 3-dehydrogenase (340 aa).

Position 38 (C38) interacts with Zn(2+). Residues T40 and H43 each act as charge relay system in the active site. Residues H63, E64, C93, C96, C99, and C107 each coordinate Zn(2+). Residues I175, D195, R200, 262-264 (LGI), and 286-287 (IY) contribute to the NAD(+) site.

The protein belongs to the zinc-containing alcohol dehydrogenase family. Homotetramer. Zn(2+) serves as cofactor.

It localises to the cytoplasm. The catalysed reaction is L-threonine + NAD(+) = (2S)-2-amino-3-oxobutanoate + NADH + H(+). It functions in the pathway amino-acid degradation; L-threonine degradation via oxydo-reductase pathway; glycine from L-threonine: step 1/2. Functionally, catalyzes the NAD(+)-dependent oxidation of L-threonine to 2-amino-3-ketobutyrate. The sequence is that of L-threonine 3-dehydrogenase from Legionella pneumophila subsp. pneumophila (strain Philadelphia 1 / ATCC 33152 / DSM 7513).